A 117-amino-acid polypeptide reads, in one-letter code: Ribosomal silencing factor RsfS (117 aa).

It belongs to the Iojap/RsfS family. Interacts with ribosomal protein uL14 (rplN).

It localises to the cytoplasm. Functionally, functions as a ribosomal silencing factor. Interacts with ribosomal protein uL14 (rplN), blocking formation of intersubunit bridge B8. Prevents association of the 30S and 50S ribosomal subunits and the formation of functional ribosomes, thus repressing translation. This is Ribosomal silencing factor RsfS from Halalkalibacterium halodurans (strain ATCC BAA-125 / DSM 18197 / FERM 7344 / JCM 9153 / C-125) (Bacillus halodurans).